We begin with the raw amino-acid sequence, 762 residues long: Protein PHTF1 (762 aa).

Positions 6–150 (RDAISWYQKK…VHCQIVSTQI (145 aa)) constitute a PHTF domain. The next 3 helical transmembrane spans lie at 77 to 97 (GLVR…VTSL), 99 to 119 (IFVW…LYLM), and 121 to 141 (PIVS…MGTV). Residues 152-184 (RPSGNNGNRRRRKLRKTVNGDGTRDNGNNSPDK) are disordered. Residues Asn-179 and Asn-224 are each glycosylated (N-linked (GlcNAc...) asparagine). Phosphoserine occurs at positions 272, 276, 277, 334, and 336. The interval 345–415 (AAFSQGSRSG…NTLHSGTKRD (71 aa)) is disordered. A compositionally biased stretch (low complexity) spans 348 to 364 (SQGSRSGMSGGSRSLNL). Asn-363 is a glycosylation site (N-linked (GlcNAc...) asparagine). Over residues 365-376 (SRRDSESTRHDS) the composition is skewed to basic and acidic residues. N-linked (GlcNAc...) asparagine glycosylation is present at Asn-431. The next 4 membrane-spanning stretches (helical) occupy residues 473–493 (GVGY…FPFL), 515–535 (TLFC…INFF), 611–631 (VVVS…CAQV), and 645–665 (WEFL…ASLG). 2 N-linked (GlcNAc...) asparagine glycosylation sites follow: Asn-674 and Asn-733. A helical membrane pass occupies residues 737 to 757 (VVILSAVSGVISDLLGFNIRL).

Interacts with FEM1B. In terms of tissue distribution, highly expressed in testis.

Its subcellular location is the endoplasmic reticulum membrane. It is found in the golgi apparatus. It localises to the cis-Golgi network membrane. This chain is Protein PHTF1, found in Rattus norvegicus (Rat).